Consider the following 155-residue polypeptide: Small ribosomal subunit protein uS7cz/uS7cy (155 aa).

Belongs to the universal ribosomal protein uS7 family. Part of the 30S ribosomal subunit.

The protein resides in the plastid. The protein localises to the chloroplast. Functionally, one of the primary rRNA binding proteins, it binds directly to 16S rRNA where it nucleates assembly of the head domain of the 30S subunit. The polypeptide is Small ribosomal subunit protein uS7cz/uS7cy (rps7-A) (Populus trichocarpa (Western balsam poplar)).